We begin with the raw amino-acid sequence, 279 residues long: Bifunctional protein FolD (279 aa).

NADP(+) contacts are provided by residues 162–164 (GRS), serine 187, and isoleucine 228.

This sequence belongs to the tetrahydrofolate dehydrogenase/cyclohydrolase family. In terms of assembly, homodimer.

It catalyses the reaction (6R)-5,10-methylene-5,6,7,8-tetrahydrofolate + NADP(+) = (6R)-5,10-methenyltetrahydrofolate + NADPH. The catalysed reaction is (6R)-5,10-methenyltetrahydrofolate + H2O = (6R)-10-formyltetrahydrofolate + H(+). Its pathway is one-carbon metabolism; tetrahydrofolate interconversion. Functionally, catalyzes the oxidation of 5,10-methylenetetrahydrofolate to 5,10-methenyltetrahydrofolate and then the hydrolysis of 5,10-methenyltetrahydrofolate to 10-formyltetrahydrofolate. The chain is Bifunctional protein FolD from Acidiphilium cryptum (strain JF-5).